The following is a 319-amino-acid chain: 2-oxoglutarate and iron-dependent oxygenase domain-containing protein 3 (319 aa).

The disordered stretch occupies residues 1–34 (MAPQRRAATKAPEGNGAAERRNRSSTKKDRAPRE). At 1–42 (MAPQRRAATKAPEGNGAAERRNRSSTKKDRAPREVQRLWQRP) the chain is on the cytoplasmic side. Over residues 18 to 34 (AERRNRSSTKKDRAPRE) the composition is skewed to basic and acidic residues. Residues 43–65 (WLRTAGLGAGFVLTALLLWSSLG) traverse the membrane as a helical; Signal-anchor for type II membrane protein segment. Topologically, residues 66–319 (ADDGVAEVLA…DHGIEDPAFP (254 aa)) are lumenal. The region spanning 207-309 (KPTFFSRINS…AITIAFSCNP (103 aa)) is the Fe2OG dioxygenase domain. Residue Asn215 is glycosylated (N-linked (GlcNAc...) asparagine). Fe cation contacts are provided by His230, Asp232, and His288. Arg298 is an active-site residue. 2-oxoglutarate is bound at residue Arg298.

Belongs to the OGFOD3 family. Fe(2+) serves as cofactor. Requires L-ascorbate as cofactor.

The protein resides in the membrane. This Homo sapiens (Human) protein is 2-oxoglutarate and iron-dependent oxygenase domain-containing protein 3 (OGFOD3).